Here is a 334-residue protein sequence, read N- to C-terminus: Galactosylgalactosylxylosylprotein 3-beta-glucuronosyltransferase 1 (334 aa).

The Cytoplasmic portion of the chain corresponds to 1-6; it reads MPKRRD. Residues 3 to 5 are essential for transport from endoplasmic reticulum to Golgi apparatus and interaction with SAR1A; that stretch reads KRR. The helical; Signal-anchor for type II membrane protein transmembrane segment at 7–27 threads the bilayer; the sequence is ILAIVLIVLPWTLLITVWHQS. The Lumenal portion of the chain corresponds to 28–334; sequence SLAPLLAVHK…KGFTDPSVEI (307 aa). Residue 91-93 participates in UDP-alpha-D-glucuronate binding; sequence PTY. Phosphothreonine is present on residues Thr103 and Thr108. A UDP-alpha-D-glucuronate-binding site is contributed by Asp122. An N-linked (GlcNAc...) asparagine glycan is attached at Asn140. UDP-alpha-D-glucuronate-binding residues include Arg165 and Arg170. Asn184 carries an N-linked (GlcNAc...) asparagine glycan. 195-197 contributes to the UDP-alpha-D-glucuronate binding site; sequence DDD. Asp197 is a Mn(2+) binding site. The segment at 245–254 is interaction with galactose moiety of substrate glycoprotein; the sequence is FDPHRPFAID. The Proton donor/acceptor role is filled by Glu284. N-linked (GlcNAc...) asparagine glycosylation occurs at Asn303. Residue 311–313 participates in UDP-alpha-D-glucuronate binding; the sequence is HTR.

The protein belongs to the glycosyltransferase 43 family. As to quaternary structure, homodimer. Interacts with SAR1A. Mn(2+) is required as a cofactor. In terms of processing, the soluble form derives from the membrane form by proteolytic processing.

The protein localises to the golgi apparatus membrane. It localises to the secreted. The protein resides in the endoplasmic reticulum membrane. It catalyses the reaction 3-O-(beta-D-galactosyl-(1-&gt;3)-beta-D-galactosyl-(1-&gt;4)-beta-D-xylosyl)-L-seryl-[protein] + UDP-alpha-D-glucuronate = 3-O-(beta-D-GlcA-(1-&gt;3)-beta-D-Gal-(1-&gt;3)-beta-D-Gal-(1-&gt;4)-beta-D-Xyl)-L-seryl-[protein] + UDP + H(+). It participates in protein modification; protein glycosylation. In terms of biological role, involved in the biosynthesis of L2/HNK-1 carbohydrate epitope on glycoproteins. Can also play a role in glycosaminoglycan biosynthesis. Substrates include asialo-orosomucoid (ASOR), asialo-fetuin, and asialo-neural cell adhesion molecule. Requires sphingomyelin for activity: stearoyl-sphingomyelin was the most effective, followed by palmitoyl-sphingomyelin and lignoceroyl-sphingomyelin. Activity was demonstrated only for sphingomyelin with a saturated fatty acid and not for that with an unsaturated fatty acid, regardless of the length of the acyl group. In Mus musculus (Mouse), this protein is Galactosylgalactosylxylosylprotein 3-beta-glucuronosyltransferase 1.